The primary structure comprises 500 residues: Lariat debranching enzyme (500 aa).

A disordered region spans residues 1–25; sequence MSSKNPVDEQPCCGSHEGSHQDPAP. Residues cysteine 48, histidine 50, aspartate 79, and asparagine 124 each contribute to the a divalent metal cation site. The tract at residues 164–194 is lariat recognition loop; that stretch reads SGIFSQGDFQFSHYERPSFSERDVKSAYHVR. 3 residues coordinate a divalent metal cation: histidine 222, histidine 274, and histidine 276. The tract at residues 453 to 500 is disordered; that stretch reads DDANAKPNQDDVDFGDEDFVIDRGHTSDEPEAKKSRLDEDKFEAVPSE. Acidic residues predominate over residues 462-471; it reads DDVDFGDEDF. Basic and acidic residues predominate over residues 472–500; sequence VIDRGHTSDEPEAKKSRLDEDKFEAVPSE.

The protein belongs to the lariat debranching enzyme family. Requires Fe(2+) as cofactor. It depends on Zn(2+) as a cofactor. The cofactor is Mn(2+).

Its subcellular location is the nucleus. Active in presence of diverse metals including Fe(2+), Zn(2+), Mn(2+). Binds two metal cations in two adjacent alpha and beta metal-binding pockets. Cleaves the 2'-5' phosphodiester linkage at the branch point of lariat intron pre-mRNAs after splicing and converts them into linear molecules that are subsequently degraded. It thereby facilitates ribonucleotide turnover. This chain is Lariat debranching enzyme, found in Caenorhabditis elegans.